Consider the following 1106-residue polypeptide: MRLPGAMPALALKGELLLLSLLLLLEPQISQGLVVTPPGPELVLNVSSTFVLTCSGSAPVVWERMSQEPPQEMAKAQDGTFSSVLTLTNLTGLDTGEYFCTHNDSRGLETDERKRLYIFVPDPTVGFLPNDAEELFIFLTEITEITIPCRVTDPQLVVTLHEKKGDVALPVPYDHQRGFSGIFEDRSYICKTTIGDREVDSDAYYVYRLQVSSINVSVNAVQTVVRQGENITLMCIVIGNEVVNFEWTYPRKESGRLVEPVTDFLLDMPYHIRSILHIPSAELEDSGTYTCNVTESVNDHQDEKAINITVVESGYVRLLGEVGTLQFAELHRSRTLQVVFEAYPPPTVLWFKDNRTLGDSSAGEIALSTRNVSETRYVSELTLVRVKVAEAGHYTMRAFHEDAEVQLSFQLQINVPVRVLELSESHPDSGEQTVRCRGRGMPQPNIIWSACRDLKRCPRELPPTLLGNSSEEESQLETNVTYWEEEQEFEVVSTLRLQHVDRPLSVRCTLRNAVGQDTQEVIVVPHSLPFKVVVISAILALVVLTIISLIILIMLWQKKPRYEIRWKVIESVSSDGHEYIYVDPMQLPYDSTWELPRDQLVLGRTLGSGAFGQVVEATAHGLSHSQATMKVAVKMLKSTARSSEKQALMSELKIMSHLGPHLNVVNLLGACTKGGPIYIITEYCRYGDLVDYLHRNKHTFLQHHSDKRRPPSAELYSNALPVGLPLPSHVSLTGESDGGYMDMSKDESVDYVPMLDMKGDVKYADIESSNYMAPYDNYVPSAPERTCRATLINESPVLSYMDLVGFSYQVANGMEFLASKNCVHRDLAARNVLICEGKLVKICDFGLARDIMRDSNYISKGSTFLPLKWMAPESIFNSLYTTLSDVWSFGILLWEIFTLGGTPYPELPMNEQFYNAIKRGYRMAQPAHASDEIYEIMQKCWEEKFEIRPPFSQLVLLLERLLGEGYKKKYQQVDEEFLRSDHPAILRSQARLPGFHGLRSPLDTSSVLYTAVQPNEGDNDYIIPLPDPKPEVADEGPLEGSPSLASSTLNEVNTSSTISCDSPLEPQDEPEPEPQLELQVEPEPELEQLPDSGCPAPRAEAEDSFL.

An N-terminal signal peptide occupies residues 1 to 32 (MRLPGAMPALALKGELLLLSLLLLLEPQISQG). Ig-like C2-type domains lie at 33-120 (LVVT…YIFV), 129-210 (PNDA…YRLQ), 214-309 (INVS…INIT), 331-403 (HRSR…HEDA), and 416-524 (PVRV…VIVV). The Extracellular segment spans residues 33–532 (LVVTPPGPEL…VVPHSLPFKV (500 aa)). Asparagine 45, asparagine 89, and asparagine 103 each carry an N-linked (GlcNAc...) asparagine glycan. A disulfide bond links cysteine 54 and cysteine 100. A disulfide bond links cysteine 149 and cysteine 190. N-linked (GlcNAc...) asparagine glycosylation is found at asparagine 215 and asparagine 230. Cysteine 235 and cysteine 291 are oxidised to a cystine. N-linked (GlcNAc...) asparagine glycosylation is found at asparagine 292, asparagine 307, asparagine 354, asparagine 371, asparagine 468, and asparagine 479. A disulfide bridge connects residues cysteine 436 and cysteine 508. Residues 533 to 553 (VVISAILALVVLTIISLIILI) form a helical membrane-spanning segment. Topologically, residues 554 to 1106 (MLWQKKPRYE…PRAEAEDSFL (553 aa)) are cytoplasmic. 3 positions are modified to phosphotyrosine; by autocatalysis: tyrosine 562, tyrosine 579, and tyrosine 581. A Protein kinase domain is found at 600-962 (LVLGRTLGSG…QLVLLLERLL (363 aa)). ATP is bound by residues 606-614 (LGSGAFGQV) and lysine 634. Phosphotyrosine; by ABL1 and ABL2 is present on tyrosine 686. Tyrosine 716, tyrosine 740, tyrosine 751, tyrosine 763, tyrosine 771, tyrosine 775, and tyrosine 778 each carry phosphotyrosine; by autocatalysis. The active-site Proton acceptor is aspartate 826. Position 857 is a phosphotyrosine; by autocatalysis (tyrosine 857). Phosphotyrosine; by ABL1 and ABL2 is present on residues tyrosine 934 and tyrosine 970. 2 positions are modified to phosphotyrosine; by autocatalysis: tyrosine 1009 and tyrosine 1021. A disordered region spans residues 1019–1106 (NDYIIPLPDP…PRAEAEDSFL (88 aa)). Residues 1043–1060 (SLASSTLNEVNTSSTISC) show a composition bias toward polar residues. Over residues 1066–1088 (PQDEPEPEPQLELQVEPEPELEQ) the composition is skewed to acidic residues.

Belongs to the protein kinase superfamily. Tyr protein kinase family. CSF-1/PDGF receptor subfamily. As to quaternary structure, interacts with homodimeric PDGFB and PDGFD, and with heterodimers formed by PDGFA and PDGFB. May also interact with homodimeric PDGFC. Monomer in the absence of bound ligand. Interaction with homodimeric PDGFB, heterodimers formed by PDGFA and PDGFB or homodimeric PDGFD, leads to receptor dimerization, where both PDGFRA homodimers and heterodimers with PDGFRB are observed. Interacts with SH2B2/APS. Interacts directly (tyrosine phosphorylated) with SHB. Interacts (tyrosine phosphorylated) with PIK3R1 and RASA1. Interacts (tyrosine phosphorylated) with CBL. Interacts (tyrosine phosphorylated) with SRC and SRC family kinases. Interacts (tyrosine phosphorylated) with PIK3C2B, maybe indirectly. Interacts (tyrosine phosphorylated) with SHC1, GRB7, GRB10 and NCK1. Interaction with GRB2 is mediated by SHC1. Interacts (via C-terminus) with NHERF1. Autophosphorylated on tyrosine residues upon ligand binding. Autophosphorylation occurs in trans, i.e. one subunit of the dimeric receptor phosphorylates tyrosine residues on the other subunit. Phosphorylation at Tyr-579, and to a lesser degree, at Tyr-581, is important for interaction with SRC family kinases. Phosphorylation at Tyr-740 and Tyr-751 is important for interaction with PIK3R1. Phosphorylation at Tyr-751 is important for interaction with NCK1. Phosphorylation at Tyr-771 and Tyr-857 is important for interaction with RASA1/GAP. Phosphorylation at Tyr-857 is important for efficient phosphorylation of PLCG1 and PTPN11, resulting in increased phosphorylation of AKT1, MAPK1/ERK2 and/or MAPK3/ERK1, PDCD6IP/ALIX and STAM, and in increased cell proliferation. Phosphorylation at Tyr-1009 is important for interaction with PTPN11. Phosphorylation at Tyr-1009 and Tyr-1021 is important for interaction with PLCG1. Phosphorylation at Tyr-1021 is important for interaction with CBL; PLCG1 and CBL compete for the same binding site. Dephosphorylated by PTPRJ at Tyr-751, Tyr-857, Tyr-1009 and Tyr-1021. Dephosphorylated by PTPN2 at Tyr-579 and Tyr-1021. Post-translationally, N-glycosylated. In terms of processing, ubiquitinated. After autophosphorylation, the receptor is polyubiquitinated, leading to its degradation.

The protein localises to the cell membrane. The protein resides in the cytoplasmic vesicle. Its subcellular location is the lysosome lumen. The catalysed reaction is L-tyrosyl-[protein] + ATP = O-phospho-L-tyrosyl-[protein] + ADP + H(+). With respect to regulation, present in an inactive conformation in the absence of bound ligand. Binding of PDGFB and/or PDGFD leads to dimerization and activation by autophosphorylation on tyrosine residues. Inhibited by imatinib. Tyrosine-protein kinase that acts as a cell-surface receptor for homodimeric PDGFB and PDGFD and for heterodimers formed by PDGFA and PDGFB, and plays an essential role in the regulation of embryonic development, cell proliferation, survival, differentiation, chemotaxis and migration. Plays an essential role in blood vessel development by promoting proliferation, migration and recruitment of pericytes and smooth muscle cells to endothelial cells. Plays a role in the migration of vascular smooth muscle cells and the formation of neointima at vascular injury sites. Required for normal development of the cardiovascular system. Required for normal recruitment of pericytes (mesangial cells) in the kidney glomerulus, and for normal formation of a branched network of capillaries in kidney glomeruli. Promotes rearrangement of the actin cytoskeleton and the formation of membrane ruffles. Binding of its cognate ligands - homodimeric PDGFB, heterodimers formed by PDGFA and PDGFB or homodimeric PDGFD -leads to the activation of several signaling cascades; the response depends on the nature of the bound ligand and is modulated by the formation of heterodimers between PDGFRA and PDGFRB. Phosphorylates PLCG1, PIK3R1, PTPN11, RASA1/GAP, CBL, SHC1 and NCK1. Activation of PLCG1 leads to the production of the cellular signaling molecules diacylglycerol and inositol 1,4,5-trisphosphate, mobilization of cytosolic Ca(2+) and the activation of protein kinase C. Phosphorylation of PIK3R1, the regulatory subunit of phosphatidylinositol 3-kinase, leads to the activation of the AKT1 signaling pathway. Phosphorylation of SHC1, or of the C-terminus of PTPN11, creates a binding site for GRB2, resulting in the activation of HRAS, RAF1 and down-stream MAP kinases, including MAPK1/ERK2 and/or MAPK3/ERK1. Promotes phosphorylation and activation of SRC family kinases. Promotes phosphorylation of PDCD6IP/ALIX and STAM. Receptor signaling is down-regulated by protein phosphatases that dephosphorylate the receptor and its down-stream effectors, and by rapid internalization of the activated receptor. This chain is Platelet-derived growth factor receptor beta (PDGFRB), found in Homo sapiens (Human).